The following is an 85-amino-acid chain: Splicing factor 3B subunit 5 (85 aa).

The protein belongs to the SF3B5 family. As to quaternary structure, component of the SF3B complex. SF3B complex associates with the splicing factor SF3A complex and a 12S RNA unit to form the U2 small nuclear ribonucleoproteins complex (U2 snRNP). Identified in the SAGA transcription regulatory histone acetylation (HAT) complex; the interaction is RNA-independent.

The protein resides in the nucleus. Its function is as follows. Involved in pre-mRNA splicing as component of spliceosome. As part of the spliceosome complex, plays a role in the regulation of spermatogonial differentiation. When associated with the SAGA transcription regulatory histone acetylation (HAT) complex, might be involved in the transcriptional activation of a subset of SAGA-regulated genes. The sequence is that of Splicing factor 3B subunit 5 from Drosophila melanogaster (Fruit fly).